The chain runs to 506 residues: Maturase K (506 aa).

The protein belongs to the intron maturase 2 family. MatK subfamily.

Its subcellular location is the plastid. The protein resides in the chloroplast. Usually encoded in the trnK tRNA gene intron. Probably assists in splicing its own and other chloroplast group II introns. This chain is Maturase K, found in Carica papaya (Papaya).